Here is a 122-residue protein sequence, read N- to C-terminus: Fluoride-specific ion channel FluC (122 aa).

4 helical membrane passes run phenylalanine 5–isoleucine 25, phenylalanine 29–leucine 49, phenylalanine 65–phenylalanine 85, and phenylalanine 93–phenylalanine 113. The Na(+) site is built by glycine 72 and threonine 75.

The protein belongs to the fluoride channel Fluc/FEX (TC 1.A.43) family.

The protein resides in the cell membrane. The enzyme catalyses fluoride(in) = fluoride(out). Its activity is regulated as follows. Na(+) is not transported, but it plays an essential structural role and its presence is essential for fluoride channel function. In terms of biological role, fluoride-specific ion channel. Important for reducing fluoride concentration in the cell, thus reducing its toxicity. This Methanococcus vannielii (strain ATCC 35089 / DSM 1224 / JCM 13029 / OCM 148 / SB) protein is Fluoride-specific ion channel FluC.